The chain runs to 296 residues: Transposase for insertion sequence element IS629 (296 aa).

Positions 125 to 285 (VAERPDQLWV…TPPAEAEKAY (161 aa)) constitute an Integrase catalytic domain.

Its function is as follows. Involved in the transposition of the insertion sequence. In Shigella sonnei, this protein is Transposase for insertion sequence element IS629.